The sequence spans 363 residues: 5-formaminoimidazole-4-carboxamide-1-(beta)-D-ribofuranosyl 5'-monophosphate synthetase (363 aa).

The 5-amino-1-(5-phospho-beta-D-ribosyl)imidazole-4-carboxamide site is built by H29 and S96. An ATP-grasp domain is found at 118-350; the sequence is RDILRWESER…MGRRVAREIR (233 aa). ATP-binding positions include 148-210 and E232; that span reads PEEI…TNFC. N260 is a 5-amino-1-(5-phospho-beta-D-ribosyl)imidazole-4-carboxamide binding site. Positions 299 and 312 each coordinate Mg(2+).

Belongs to the phosphohexose mutase family. Mg(2+) is required as a cofactor. Requires Mn(2+) as cofactor.

It catalyses the reaction 5-amino-1-(5-phospho-beta-D-ribosyl)imidazole-4-carboxamide + formate + ATP = 5-formamido-1-(5-phospho-D-ribosyl)imidazole-4-carboxamide + ADP + phosphate. The protein operates within purine metabolism; IMP biosynthesis via de novo pathway; 5-formamido-1-(5-phospho-D-ribosyl)imidazole-4-carboxamide from 5-amino-1-(5-phospho-D-ribosyl)imidazole-4-carboxamide (formate route): step 1/1. Functionally, catalyzes the ATP- and formate-dependent formylation of 5-aminoimidazole-4-carboxamide-1-beta-d-ribofuranosyl 5'-monophosphate (AICAR) to 5-formaminoimidazole-4-carboxamide-1-beta-d-ribofuranosyl 5'-monophosphate (FAICAR) in the absence of folates. The protein is 5-formaminoimidazole-4-carboxamide-1-(beta)-D-ribofuranosyl 5'-monophosphate synthetase of Methanothermobacter thermautotrophicus (strain ATCC 29096 / DSM 1053 / JCM 10044 / NBRC 100330 / Delta H) (Methanobacterium thermoautotrophicum).